The following is an 850-amino-acid chain: Receptor-like serine/threonine-protein kinase SD1-8 (850 aa).

The N-terminal stretch at methionine 1 to serine 26 is a signal peptide. The Extracellular portion of the chain corresponds to isoleucine 27–lysine 441. In terms of domain architecture, Bulb-type lectin spans threonine 31–tryptophan 153. Asparagine 43, asparagine 118, and asparagine 242 each carry an N-linked (GlcNAc...) asparagine glycan. Residues proline 292–glutamine 328 form the EGF-like domain. 4 cysteine pairs are disulfide-bonded: cysteine 296/cysteine 308, cysteine 302/cysteine 316, cysteine 378/cysteine 403, and cysteine 382/cysteine 388. The region spanning cysteine 347–alanine 428 is the PAN domain. Asparagine 387 and asparagine 437 each carry an N-linked (GlcNAc...) asparagine glycan. A helical membrane pass occupies residues isoleucine 442–leucine 462. Residues tryptophan 463–arginine 850 lie on the Cytoplasmic side of the membrane. The Protein kinase domain occupies phenylalanine 526–isoleucine 807. Residues leucine 532–valine 540 and lysine 554 contribute to the ATP site. A caM-binding region spans residues serine 615–isoleucine 632. Aspartate 651 serves as the catalytic Proton acceptor.

This sequence belongs to the protein kinase superfamily. Ser/Thr protein kinase family. As to quaternary structure, interacts with PUB9, PUB13, PUB14 and PUB38. Expressed in the root-hypocotyl transition zone, at the base of lateral roots, axillary buds and pedicels.

Its subcellular location is the cell membrane. The enzyme catalyses L-seryl-[protein] + ATP = O-phospho-L-seryl-[protein] + ADP + H(+). The catalysed reaction is L-threonyl-[protein] + ATP = O-phospho-L-threonyl-[protein] + ADP + H(+). Involved in the regulation of cellular expansion and differentiation. This Arabidopsis thaliana (Mouse-ear cress) protein is Receptor-like serine/threonine-protein kinase SD1-8 (SD18).